The following is a 430-amino-acid chain: MHPSLLSPTSLGPSGSLHSPISTLSSPMNGLGSPFSVISSPMGPHSMASPGVGYGPSISPQLNSHMNSVSSSEDIKPPLGLNGVMKVPAQPSGTPLSLTKHICAICGDRSSGKHYGVYSCEGCKGFFKRTVRKDLTYTCRDNKDCVIDKRQRNRCQYCRYQKCLAMGMKREAVQEERQRAKERSENEVESTSSANEDMPVEKILEAELAVEPKTETYIETNVPMPSNSPNDPVTNICQAADKQLFTLVEWAKRIPHFSELPLDDQVILLRAGWNELLIASFSHRSIAVKDGILLATGLHVHRNSAHSAGVGAIFDRVLTELVSKMRDMQMDKTELGCLRAIVLFNPDSKGLSNPGEVEALREKVYASLEAYCKHKYPEQPGRFAKLLLRLPALRSIGLKCLEHLFFFKLIGDTPIDTFLMEMLEAPHQMT.

The span at 1-20 (MHPSLLSPTSLGPSGSLHSP) shows a compositional bias: low complexity. Disordered regions lie at residues 1–25 (MHPS…STLS) and 48–73 (ASPG…SSSE). Positions 1–99 (MHPSLLSPTS…QPSGTPLSLT (99 aa)) are modulating. Polar residues predominate over residues 58–72 (ISPQLNSHMNSVSSS). The nuclear receptor DNA-binding region spans 100–175 (KHICAICGDR…MGMKREAVQE (76 aa)). Residues Cys103, Cys106, Cys120, and Cys123 each contribute to the Zn(2+) site. The NR C4-type zinc-finger motif lies at 103-123 (CAICGDRSSGKHYGVYSCEGC). The segment at 128 to 133 (KRTVRK) is nuclear localization signal. The Zn(2+) site is built by Cys139, Cys145, Cys155, and Cys158. The NR C4-type zinc-finger motif lies at 139-158 (CRDNKDCVIDKRQRNRCQYC). The segment covering 174 to 186 (QEERQRAKERSEN) has biased composition (basic and acidic residues). Positions 174-196 (QEERQRAKERSENEVESTSSANE) are disordered. Residues 176–192 (ERQRAKERSENEVESTS) form a hinge region. The NR LBD domain occupies 195–426 (NEDMPVEKIL…TFLMEMLEAP (232 aa)). Positions 284 and 295 each coordinate 9-cis-retinoate. The all-trans-retinoate site is built by Arg284 and Ala295. Positions 316 to 336 (RVLTELVSKMRDMQMDKTELG) are required for nuclear export. The AF-2 stretch occupies residues 415–426 (IDTFLMEMLEAP).

Belongs to the nuclear hormone receptor family. NR2 subfamily. Homodimer. Heterodimer; with a rar molecule. Binds DNA preferentially as a rar/rxr heterodimer.

It is found in the nucleus. In terms of biological role, receptor for retinoic acid that acts as a transcription factor. Forms homo- or heterodimers with retinoic acid receptors (rars) and binds to target response elements in response to their ligands, all-trans or 9-cis retinoic acid, to regulate gene expression in various biological processes. The rar/rxr heterodimers bind to the retinoic acid response elements (RARE) composed of tandem 5'-AGGTCA-3' sites known as DR1-DR5 to regulate transcription. The high affinity ligand for rxrs is 9-cis retinoic acid. In the absence of ligand, the rar/rxr heterodimers associate with a multiprotein complex containing transcription corepressors that induce histone deacetylation, chromatin condensation and transcriptional suppression. On ligand binding, the corepressors dissociate from the receptors and coactivators are recruited leading to transcriptional activation. This chain is Retinoic acid receptor RXR-alpha-A, found in Danio rerio (Zebrafish).